Consider the following 84-residue polypeptide: Cell division topological specificity factor (84 aa).

Belongs to the MinE family.

Prevents the cell division inhibition by proteins MinC and MinD at internal division sites while permitting inhibition at polar sites. This ensures cell division at the proper site by restricting the formation of a division septum at the midpoint of the long axis of the cell. The polypeptide is Cell division topological specificity factor (Chromohalobacter salexigens (strain ATCC BAA-138 / DSM 3043 / CIP 106854 / NCIMB 13768 / 1H11)).